A 122-amino-acid polypeptide reads, in one-letter code: Large ribosomal subunit protein uL14 (122 aa).

It belongs to the universal ribosomal protein uL14 family. Part of the 50S ribosomal subunit. Forms a cluster with proteins L3 and L19. In the 70S ribosome, L14 and L19 interact and together make contacts with the 16S rRNA in bridges B5 and B8.

Binds to 23S rRNA. Forms part of two intersubunit bridges in the 70S ribosome. The chain is Large ribosomal subunit protein uL14 from Myxococcus xanthus (strain DK1622).